The sequence spans 165 residues: Destrin (165 aa).

N-acetylalanine is present on A2. The residue at position 3 (S3) is a Phosphoserine. The ADF-H domain maps to 4-153; that stretch reads GVQVADEVCR…NRTCIAEKLG (150 aa). K19 bears the N6-acetyllysine mark. A Nuclear localization signal motif is present at residues 30–34; sequence KKRKK.

Belongs to the actin-binding proteins ADF family. Post-translationally, ISGylated. In terms of tissue distribution, widely expressed. Not found in skeletal muscle.

Its function is as follows. Actin-depolymerizing protein. Severs actin filaments (F-actin) and binds to actin monomers (G-actin). Acts in a pH-independent manner. This Mus musculus (Mouse) protein is Destrin (Dstn).